The primary structure comprises 308 residues: Cap-specific mRNA (nucleoside-2'-O-)-methyltransferase (308 aa).

MRNA is bound at residue tyrosine 30. Glutamine 46, tyrosine 74, glycine 76, glycine 80, aspartate 103, arginine 105, valine 124, and aspartate 147 together coordinate S-adenosyl-L-methionine. Residues 177–257 (PIASSLKWRC…NTKIRPKIVL (81 aa)) are binding to NPH-I. Lysine 183 functions as the For methyltransferase activity in the catalytic mechanism. MRNA-binding positions include 185 to 188 (RCPF), aspartate 190, 213 to 215 (SAE), and glutamate 241.

This sequence belongs to the class I-like SAM-binding methyltransferase superfamily. Poxvirus/kinetoplastid 2'-O-MTase family. Interacts with poly(A) polymerase catalytic subunit OPG063. Interacts with OPG109 and OPG123; these interactions might help linking transcription to capping and polyadenylation.

It localises to the virion. It catalyses the reaction a 5'-end (N(7)-methyl 5'-triphosphoguanosine)-ribonucleoside in mRNA + S-adenosyl-L-methionine = a 5'-end (N(7)-methyl 5'-triphosphoguanosine)-(2'-O-methyl-ribonucleoside) in mRNA + S-adenosyl-L-homocysteine + H(+). Its function is as follows. Displays methyltransferase, positive regulation of the poly(A) polymerase and transcription elongation activities. Involved in the modification of both mRNA ends and in intermediate and late gene positive transcription elongation. At the mRNAs 5' end, methylates the ribose 2' OH group of the first transcribed nucleotide, thereby producing a 2'-O-methylpurine cap. At the 3' end, functions as a processivity factor which stimulates the activity of the viral poly(A) polymerase OPG063 that creates mRNA's poly(A) tail. In the presence of OPG102, OPG063 does not dissociate from the RNA allowing tail elongation to around 250 adenylates. The polypeptide is Cap-specific mRNA (nucleoside-2'-O-)-methyltransferase (OPG102) (Fowlpox virus (strain NVSL) (FPV)).